The chain runs to 309 residues: UDP-N-acetylenolpyruvoylglucosamine reductase (309 aa).

One can recognise an FAD-binding PCMH-type domain in the interval 40–204 (LGGKVPLFAI…LQATFKLKKG (165 aa)). Residue arginine 182 is part of the active site. Catalysis depends on serine 233, which acts as the Proton donor. Glutamate 304 is an active-site residue.

It belongs to the MurB family. FAD is required as a cofactor.

It is found in the cytoplasm. The catalysed reaction is UDP-N-acetyl-alpha-D-muramate + NADP(+) = UDP-N-acetyl-3-O-(1-carboxyvinyl)-alpha-D-glucosamine + NADPH + H(+). It functions in the pathway cell wall biogenesis; peptidoglycan biosynthesis. Functionally, cell wall formation. The polypeptide is UDP-N-acetylenolpyruvoylglucosamine reductase (Fervidobacterium nodosum (strain ATCC 35602 / DSM 5306 / Rt17-B1)).